We begin with the raw amino-acid sequence, 198 residues long: ATP-dependent Clp protease proteolytic subunit (198 aa).

The Nucleophile role is filled by Ser-98. His-123 is an active-site residue.

This sequence belongs to the peptidase S14 family. Fourteen ClpP subunits assemble into 2 heptameric rings which stack back to back to give a disk-like structure with a central cavity, resembling the structure of eukaryotic proteasomes.

The protein localises to the cytoplasm. It catalyses the reaction Hydrolysis of proteins to small peptides in the presence of ATP and magnesium. alpha-casein is the usual test substrate. In the absence of ATP, only oligopeptides shorter than five residues are hydrolyzed (such as succinyl-Leu-Tyr-|-NHMec, and Leu-Tyr-Leu-|-Tyr-Trp, in which cleavage of the -Tyr-|-Leu- and -Tyr-|-Trp bonds also occurs).. Functionally, cleaves peptides in various proteins in a process that requires ATP hydrolysis. Has a chymotrypsin-like activity. Plays a major role in the degradation of misfolded proteins. The chain is ATP-dependent Clp protease proteolytic subunit from Levilactobacillus brevis (strain ATCC 367 / BCRC 12310 / CIP 105137 / JCM 1170 / LMG 11437 / NCIMB 947 / NCTC 947) (Lactobacillus brevis).